We begin with the raw amino-acid sequence, 903 residues long: DNA mismatch repair protein MutS (903 aa).

ATP is bound at residue 655–662 (GPNMAGKS).

This sequence belongs to the DNA mismatch repair MutS family.

This protein is involved in the repair of mismatches in DNA. It is possible that it carries out the mismatch recognition step. This protein has a weak ATPase activity. The protein is DNA mismatch repair protein MutS of Caulobacter vibrioides (strain ATCC 19089 / CIP 103742 / CB 15) (Caulobacter crescentus).